Reading from the N-terminus, the 153-residue chain is MARNTLSSRFRRVDIDEFDENKFVDEQEEAAAAAGEPGPDPSEVDGLLRQGDMLRAFHAALRNSPVNTKNQAVKERAQGVVLKVLTNFKSSEIEQAVQSLDRNGIDLLMKYIYKGFEKPTENSSAVLLQWHEKALAVGGLGSIIRVLTARKTV.

S64 carries the post-translational modification Phosphoserine.

Belongs to the ARPC5 family. May be a component of the Arp2/3 complex in which it may replace ARPC5.

It is found in the cytoplasm. It localises to the cytoskeleton. The protein resides in the cell projection. May function as component of the Arp2/3 complex which is involved in regulation of actin polymerization and together with an activating nucleation-promoting factor (NPF) mediates the formation of branched actin networks. The protein is Actin-related protein 2/3 complex subunit 5-like protein (ARPC5L) of Bos taurus (Bovine).